Consider the following 67-residue polypeptide: Type 3 secretion system chaperone PscE (67 aa).

Residues 16-37 (HAAALRQRLQAALAECRRELAR) adopt a coiled-coil conformation.

Belongs to the YscE family. As to quaternary structure, forms a stable ternary complex with PscF/SctF and PscG within the cytoplasm. Co-stabilized by PscG.

The protein localises to the cytoplasm. In terms of biological role, chaperone of the type III secretion system (T3SS), also called injectisome, which is used to inject bacterial effector proteins into eukaryotic host cells, facilitating the establishment and dissemination of infection. Along with PscG, prevents premature polymerization of the PscF/SctF needle protein within the cytoplasm. Required for type III secretion needle assembly. Also required for cytotoxicity by influencing PscF/SctF levels. This is Type 3 secretion system chaperone PscE (pscE) from Pseudomonas aeruginosa (strain ATCC 15692 / DSM 22644 / CIP 104116 / JCM 14847 / LMG 12228 / 1C / PRS 101 / PAO1).